The sequence spans 131 residues: Large ribosomal subunit protein bL19 (131 aa).

Positions 107–131 (GKSARIAERAERGSDKGKAAPAAAE) are disordered. Basic and acidic residues predominate over residues 111–124 (RIAERAERGSDKGK).

It belongs to the bacterial ribosomal protein bL19 family.

Its function is as follows. This protein is located at the 30S-50S ribosomal subunit interface and may play a role in the structure and function of the aminoacyl-tRNA binding site. The sequence is that of Large ribosomal subunit protein bL19 from Methylobacterium sp. (strain 4-46).